Reading from the N-terminus, the 491-residue chain is Aspartyl/glutamyl-tRNA(Asn/Gln) amidotransferase subunit B (491 aa).

It belongs to the GatB/GatE family. GatB subfamily. In terms of assembly, heterotrimer of A, B and C subunits.

It carries out the reaction L-glutamyl-tRNA(Gln) + L-glutamine + ATP + H2O = L-glutaminyl-tRNA(Gln) + L-glutamate + ADP + phosphate + H(+). It catalyses the reaction L-aspartyl-tRNA(Asn) + L-glutamine + ATP + H2O = L-asparaginyl-tRNA(Asn) + L-glutamate + ADP + phosphate + 2 H(+). Its function is as follows. Allows the formation of correctly charged Asn-tRNA(Asn) or Gln-tRNA(Gln) through the transamidation of misacylated Asp-tRNA(Asn) or Glu-tRNA(Gln) in organisms which lack either or both of asparaginyl-tRNA or glutaminyl-tRNA synthetases. The reaction takes place in the presence of glutamine and ATP through an activated phospho-Asp-tRNA(Asn) or phospho-Glu-tRNA(Gln). In Burkholderia cenocepacia (strain ATCC BAA-245 / DSM 16553 / LMG 16656 / NCTC 13227 / J2315 / CF5610) (Burkholderia cepacia (strain J2315)), this protein is Aspartyl/glutamyl-tRNA(Asn/Gln) amidotransferase subunit B.